Reading from the N-terminus, the 164-residue chain is Crossover junction endodeoxyribonuclease RuvC (164 aa).

Active-site residues include D7, E67, and D139. Residues D7, E67, and D139 each contribute to the Mg(2+) site.

Belongs to the RuvC family. In terms of assembly, homodimer which binds Holliday junction (HJ) DNA. The HJ becomes 2-fold symmetrical on binding to RuvC with unstacked arms; it has a different conformation from HJ DNA in complex with RuvA. In the full resolvosome a probable DNA-RuvA(4)-RuvB(12)-RuvC(2) complex forms which resolves the HJ. It depends on Mg(2+) as a cofactor.

It is found in the cytoplasm. It catalyses the reaction Endonucleolytic cleavage at a junction such as a reciprocal single-stranded crossover between two homologous DNA duplexes (Holliday junction).. The RuvA-RuvB-RuvC complex processes Holliday junction (HJ) DNA during genetic recombination and DNA repair. Endonuclease that resolves HJ intermediates. Cleaves cruciform DNA by making single-stranded nicks across the HJ at symmetrical positions within the homologous arms, yielding a 5'-phosphate and a 3'-hydroxyl group; requires a central core of homology in the junction. The consensus cleavage sequence is 5'-(A/T)TT(C/G)-3'. Cleavage occurs on the 3'-side of the TT dinucleotide at the point of strand exchange. HJ branch migration catalyzed by RuvA-RuvB allows RuvC to scan DNA until it finds its consensus sequence, where it cleaves and resolves the cruciform DNA. The polypeptide is Crossover junction endodeoxyribonuclease RuvC (Geobacter metallireducens (strain ATCC 53774 / DSM 7210 / GS-15)).